A 396-amino-acid polypeptide reads, in one-letter code: GTPase Obg (396 aa).

The region spanning 1–159 is the Obg domain; that stretch reads MKFVDEATIY…RNIRLELKVL (159 aa). Residues 160-333 enclose the OBG-type G domain; that stretch reads ADVGLLGLPN…LCQDIMTWIE (174 aa). Residues 166 to 173, 191 to 195, 213 to 216, 283 to 286, and 314 to 316 contribute to the GTP site; these read GLPNAGKS, FTTLV, DIPG, NKTD, and SAL. Residues S173 and T193 each contribute to the Mg(2+) site. Disordered stretches follow at residues 337–356 and 373–396; these read EEERDDPEVAEADRLNREQM and LARKKAKESDDDDDDEDVEVFYAP. Basic and acidic residues predominate over residues 347–356; that stretch reads EADRLNREQM. Acidic residues predominate over residues 381–396; the sequence is SDDDDDDEDVEVFYAP.

This sequence belongs to the TRAFAC class OBG-HflX-like GTPase superfamily. OBG GTPase family. In terms of assembly, monomer. Mg(2+) is required as a cofactor.

The protein localises to the cytoplasm. Functionally, an essential GTPase which binds GTP, GDP and possibly (p)ppGpp with moderate affinity, with high nucleotide exchange rates and a fairly low GTP hydrolysis rate. Plays a role in control of the cell cycle, stress response, ribosome biogenesis and in those bacteria that undergo differentiation, in morphogenesis control. This is GTPase Obg from Hahella chejuensis (strain KCTC 2396).